Reading from the N-terminus, the 95-residue chain is MENIDEWLVQAKKVTYEASREPGLGRIQQRLSREPSQMVLTARHDILRAVCCAALASLVAFTAIDRIAVGLYQKQQPTWVAAPSAASPFGLLIGK.

This sequence to A.eutrophus CnrY.

Its function is as follows. Component of the NCC cation-efflux system that confers resistance to nickel, cobalt and cadmium. May be involved in the regulation of NCC. The protein is Nickel-cobalt-cadmium resistance protein NccY (nccY) of Alcaligenes xylosoxydans xylosoxydans (Achromobacter xylosoxidans).